A 459-amino-acid chain; its full sequence is Putrescine aminotransferase (459 aa).

Pyridoxal 5'-phosphate is bound by residues 150–151 (GT) and glutamine 274. Lysine 300 is subject to N6-(pyridoxal phosphate)lysine. Threonine 332 contributes to the pyridoxal 5'-phosphate binding site.

Belongs to the class-III pyridoxal-phosphate-dependent aminotransferase family. Putrescine aminotransferase subfamily. The cofactor is pyridoxal 5'-phosphate.

It carries out the reaction an alkane-alpha,omega-diamine + 2-oxoglutarate = an omega-aminoaldehyde + L-glutamate. The catalysed reaction is putrescine + 2-oxoglutarate = 1-pyrroline + L-glutamate + H2O. The enzyme catalyses cadaverine + 2-oxoglutarate = 5-aminopentanal + L-glutamate. It functions in the pathway amine and polyamine degradation; putrescine degradation; 4-aminobutanal from putrescine (transaminase route): step 1/1. In terms of biological role, catalyzes the aminotransferase reaction from putrescine to 2-oxoglutarate, leading to glutamate and 4-aminobutanal, which spontaneously cyclizes to form 1-pyrroline. This is the first step in one of two pathways for putrescine degradation, where putrescine is converted into 4-aminobutanoate (gamma-aminobutyrate or GABA) via 4-aminobutanal. Also functions as a cadaverine transaminase in a a L-lysine degradation pathway to succinate that proceeds via cadaverine, glutarate and L-2-hydroxyglutarate. This chain is Putrescine aminotransferase, found in Salmonella dublin (strain CT_02021853).